The chain runs to 122 residues: Large ribosomal subunit protein uL14 (122 aa).

As to quaternary structure, forms a cluster with proteins L3 and L19. In the 70S ribosome, L14 and L19 interact and together make contacts with the 16S rRNA in bridges B5 and B8. Part of the 50S ribosomal subunit.

Its function is as follows. Binds to 23S rRNA. Forms part of two intersubunit bridges in the 70S ribosome. The chain is Large ribosomal subunit protein uL14 from Rhodopseudomonas palustris (strain ATCC BAA-98 / CGA009).